A 485-amino-acid polypeptide reads, in one-letter code: UDP-N-acetylmuramate--L-alanine ligase (485 aa).

Gly-120–Thr-126 lines the ATP pocket.

Belongs to the MurCDEF family.

Its subcellular location is the cytoplasm. The catalysed reaction is UDP-N-acetyl-alpha-D-muramate + L-alanine + ATP = UDP-N-acetyl-alpha-D-muramoyl-L-alanine + ADP + phosphate + H(+). It functions in the pathway cell wall biogenesis; peptidoglycan biosynthesis. Its function is as follows. Cell wall formation. The chain is UDP-N-acetylmuramate--L-alanine ligase from Rickettsia massiliae (strain Mtu5).